Here is a 493-residue protein sequence, read N- to C-terminus: Guanosine-5'-triphosphate,3'-diphosphate pyrophosphatase (493 aa).

The protein belongs to the GppA/Ppx family. GppA subfamily.

It catalyses the reaction guanosine 3'-diphosphate 5'-triphosphate + H2O = guanosine 3',5'-bis(diphosphate) + phosphate + H(+). It participates in purine metabolism; ppGpp biosynthesis; ppGpp from GTP: step 2/2. Catalyzes the conversion of pppGpp to ppGpp. Guanosine pentaphosphate (pppGpp) is a cytoplasmic signaling molecule which together with ppGpp controls the 'stringent response', an adaptive process that allows bacteria to respond to amino acid starvation, resulting in the coordinated regulation of numerous cellular activities. In Salmonella paratyphi A (strain ATCC 9150 / SARB42), this protein is Guanosine-5'-triphosphate,3'-diphosphate pyrophosphatase.